The primary structure comprises 466 residues: Cysteine--tRNA ligase (466 aa).

Cysteine 28 is a Zn(2+) binding site. Residues 30 to 40 carry the 'HIGH' region motif; sequence PTVYNFFHIGN. Residues cysteine 208, histidine 233, and glutamate 237 each coordinate Zn(2+). A 'KMSKS' region motif is present at residues 265–269; it reads KMSKS. Lysine 268 is an ATP binding site.

Belongs to the class-I aminoacyl-tRNA synthetase family. As to quaternary structure, monomer. It depends on Zn(2+) as a cofactor.

Its subcellular location is the cytoplasm. It carries out the reaction tRNA(Cys) + L-cysteine + ATP = L-cysteinyl-tRNA(Cys) + AMP + diphosphate. The chain is Cysteine--tRNA ligase from Clostridium perfringens (strain 13 / Type A).